A 231-amino-acid polypeptide reads, in one-letter code: Ureidoacrylate amidohydrolase RutB (231 aa).

Aspartate 25 acts as the Proton acceptor in catalysis. The active site involves lysine 134. Cysteine 167 acts as the Nucleophile in catalysis.

It belongs to the isochorismatase family. RutB subfamily.

It catalyses the reaction (Z)-3-ureidoacrylate + H2O + H(+) = (Z)-3-aminoacrylate + NH4(+) + CO2. It carries out the reaction (Z)-3-ureidoacrylate + H2O = (Z)-3-aminoacrylate + carbamate + H(+). The catalysed reaction is (Z)-2-methylureidoacrylate + H2O + H(+) = (Z)-2-methylaminoacrylate + NH4(+) + CO2. Hydrolyzes ureidoacrylate to form aminoacrylate and carbamate. The carbamate hydrolyzes spontaneously, thereby releasing one of the nitrogen atoms of the pyrimidine ring as ammonia and one of its carbon atoms as CO2. This Escherichia coli O9:H4 (strain HS) protein is Ureidoacrylate amidohydrolase RutB.